The sequence spans 248 residues: Probable transcriptional regulatory protein RPD_4171 (248 aa).

Residues 1-22 are disordered; the sequence is MAGHSQFKNIMHRKGKQDAQRS.

This sequence belongs to the TACO1 family.

The protein resides in the cytoplasm. The sequence is that of Probable transcriptional regulatory protein RPD_4171 from Rhodopseudomonas palustris (strain BisB5).